We begin with the raw amino-acid sequence, 557 residues long: Proline--tRNA ligase (557 aa).

This sequence belongs to the class-II aminoacyl-tRNA synthetase family. ProS type 1 subfamily. Homodimer.

It localises to the cytoplasm. It catalyses the reaction tRNA(Pro) + L-proline + ATP = L-prolyl-tRNA(Pro) + AMP + diphosphate. Catalyzes the attachment of proline to tRNA(Pro) in a two-step reaction: proline is first activated by ATP to form Pro-AMP and then transferred to the acceptor end of tRNA(Pro). As ProRS can inadvertently accommodate and process non-cognate amino acids such as alanine and cysteine, to avoid such errors it has two additional distinct editing activities against alanine. One activity is designated as 'pretransfer' editing and involves the tRNA(Pro)-independent hydrolysis of activated Ala-AMP. The other activity is designated 'posttransfer' editing and involves deacylation of mischarged Ala-tRNA(Pro). The misacylated Cys-tRNA(Pro) is not edited by ProRS. The sequence is that of Proline--tRNA ligase from Baumannia cicadellinicola subsp. Homalodisca coagulata.